The chain runs to 395 residues: Yellow-related salivary protein M35 (395 aa).

A signal peptide spans 1 to 18 (MKLILTVLAFLSLQVALS).

The protein belongs to the major royal jelly protein family. Salivary gland (at protein level).

Its subcellular location is the secreted. In terms of biological role, probably modulates blood feeding of sand flies on vertebrate species by binding and sequestering different mediators involved in the host response. Functions as a chemoattractant for host neutrophils; likely acts through a G-protein-coupled receptor and effect is dependent on calcium influx and phosphatidylinositol 3-kinases (PI3K) activity. Its function is as follows. (Microbial infection) Probably enhances infection caused by Leishmania species in the host through augmentation of host neutrophil recruitment into the skin. This chain is Yellow-related salivary protein M35, found in Phlebotomus duboscqi (Sandfly).